A 164-amino-acid chain; its full sequence is 5-formyltetrahydrofolate cyclo-ligase (164 aa).

Residue 3–7 coordinates ATP; it reads KNALR. 2 residues coordinate substrate: Glu-50 and Glu-55. ATP is bound at residue 115–123; it reads RLGFGKGYY. Asp-124 is a binding site for Mg(2+). 2 residues coordinate ATP: Arg-125 and Trp-153. Asp-154 provides a ligand contact to Mg(2+).

This sequence belongs to the 5-formyltetrahydrofolate cyclo-ligase family. In terms of assembly, monomer or homodimer. It depends on Mg(2+) as a cofactor. The cofactor is Mn(2+). Ca(2+) serves as cofactor. Zn(2+) is required as a cofactor. Requires Fe(2+) as cofactor. It depends on Co(2+) as a cofactor. The cofactor is Cu(2+).

The protein resides in the cytoplasm. It carries out the reaction (6S)-5-formyl-5,6,7,8-tetrahydrofolate + ATP = (6R)-5,10-methenyltetrahydrofolate + ADP + phosphate. Involved in folate metabolism. Catalyzes the irreversible conversion of 5-formyltetrahydrofolate (5-FTHF) to yield 5,10-methenyltetrahydrofolate. This Mycoplasma pneumoniae (strain ATCC 29342 / M129 / Subtype 1) (Mycoplasmoides pneumoniae) protein is 5-formyltetrahydrofolate cyclo-ligase.